The primary structure comprises 102 residues: Small ribosomal subunit protein uS10 (102 aa).

The protein belongs to the universal ribosomal protein uS10 family. In terms of assembly, part of the 30S ribosomal subunit.

In terms of biological role, involved in the binding of tRNA to the ribosomes. The sequence is that of Small ribosomal subunit protein uS10 from Halalkalibacterium halodurans (strain ATCC BAA-125 / DSM 18197 / FERM 7344 / JCM 9153 / C-125) (Bacillus halodurans).